A 1094-amino-acid chain; its full sequence is Formin-like protein 1 (1094 aa).

3 disordered regions span residues 1 to 29, 173 to 199, and 507 to 627; these read MGNA…KQPM, SGAE…VPKS, and AATP…GVKA. G2 carries the N-myristoyl glycine lipid modification. S7 carries the phosphoserine modification. A compositionally biased stretch (pro residues) spans 16-28; that stretch reads ASPPKQPAVPKQP. One can recognise a GBD/FH3 domain in the interval 27-464; the sequence is QPMPAAGELE…SRRIPEPEKV (438 aa). At S184 the chain carries Phosphoserine. Polar residues predominate over residues 519–529; it reads RVSTDSPSTAE. Composition is skewed to pro residues over residues 535-549 and 559-610; these read ASPP…PPLP and PSAP…PGGP. One can recognise an FH2 domain in the interval 627–1018; that stretch reads AKKPIQTKFR…DTSGREEPPT (392 aa). The residue at position 688 (S688) is a Phosphoserine. The span at 1002-1017 shows a compositional bias: basic and acidic residues; sequence WKKEAAADTSGREEPP. Positions 1002–1094 are disordered; it reads WKKEAAADTS…PLPVTTDLAL (93 aa). S1021 is modified (phosphoserine). The DAD domain maps to 1049–1082; it reads SDRDGAIEDIITDLRNQPYIRADTGRRSARRRPP.

This sequence belongs to the formin homology family. As to quaternary structure, interacts with RAC1, PFN1 and PFN2. Interacts (activated by RAC1) with SRGAP2 (via SH3 domain); regulates the actin filament severing activity of FMNL1. Myristoylation mediates membrane localization. As to expression, highly expressed in the spleen, lymph node and bone marrow cells.

Its subcellular location is the cytoplasm. The protein resides in the cell membrane. It localises to the cytoplasmic vesicle. It is found in the phagosome. Its function is as follows. Plays a role in the regulation of cell morphology and cytoskeletal organization. Required in the cortical actin filament dynamics and cell shape. May play a role in the control of cell motility and survival of macrophages. The sequence is that of Formin-like protein 1 (Fmnl1) from Mus musculus (Mouse).